Reading from the N-terminus, the 208-residue chain is Probable hydrolase YcaC (208 aa).

The active site involves cysteine 118.

In terms of assembly, homooctamer composed of two tetrameric rings.

The protein is Probable hydrolase YcaC (ycaC) of Escherichia coli (strain K12).